We begin with the raw amino-acid sequence, 912 residues long: Rho guanine nucleotide exchange factor 1 (912 aa).

One can recognise an RGSL domain in the interval 41-232; it reads EQNSQFQSLE…GLYMRHLGVR (192 aa). The tract at residues 248-413 is disordered; it reads KVMGNRRSDE…PDTLHSLPKS (166 aa). A compositionally biased stretch (basic and acidic residues) spans 283–313; the sequence is DFRHLKAEVDAEKPGATDRKGGVGMPSRDRN. Residues 365–381 are compositionally biased toward acidic residues; that stretch reads STDEGAETESPEPGDEG. 2 positions are modified to phosphoserine: S374 and S409. Residues 416–605 enclose the DH domain; sequence KRQEVISELL…REILHHVNQA (190 aa). The region spanning 647 to 760 is the PH domain; it reads KLVHEGPLTW…WCALITETAG (114 aa). T695 is modified (phosphothreonine). Y738 carries the phosphotyrosine; by JAK2 modification. 2 disordered regions span residues 763–802 and 841–865; these read KVPAPASRPKPRPSPSSTREPLLSSSENGNGGRETSPADA and AEEDNGAGPPRDGDGVPGGGPLSPA. Residues 777–789 are compositionally biased toward low complexity; it reads PSSTREPLLSSSE. S863 carries the phosphoserine modification. Residues 865-896 adopt a coiled-coil conformation; sequence ARTQEIQENLLSLEETMKQLEELEEEFCRLRP.

In terms of assembly, interacts with RHOA, GNA12 and GNA13. Homooligomerizes through the coiled coil region. May interact with CCPG1. Interacts with CTNNAL1. Post-translationally, phosphorylated by PKCA. Angiotensin-2 induced Tyr-738 phosphorylation is mediated by JAK2. Ubiquitously expressed.

It localises to the cytoplasm. Its subcellular location is the membrane. Functionally, seems to play a role in the regulation of RhoA GTPase by guanine nucleotide-binding alpha-12 (GNA12) and alpha-13 (GNA13) subunits. Acts as a GTPase-activating protein (GAP) for GNA12 and GNA13, and as guanine nucleotide exchange factor (GEF) for RhoA GTPase. Activated G alpha 13/GNA13 stimulates the RhoGEF activity through interaction with the RGS-like domain. This GEF activity is inhibited by binding to activated GNA12. Mediates angiotensin-2-induced RhoA activation. In lymphoid follicles, may trigger activation of GNA13 as part of S1PR2-dependent signaling pathway that leads to inhibition of germinal center (GC) B cell growth and migration outside the GC niche. The sequence is that of Rho guanine nucleotide exchange factor 1 (ARHGEF1) from Homo sapiens (Human).